The primary structure comprises 214 residues: Large ribosomal subunit protein uL3 (214 aa).

A disordered region spans residues Gly119–Met159.

Belongs to the universal ribosomal protein uL3 family. Part of the 50S ribosomal subunit. Forms a cluster with proteins L14 and L19.

Functionally, one of the primary rRNA binding proteins, it binds directly near the 3'-end of the 23S rRNA, where it nucleates assembly of the 50S subunit. The sequence is that of Large ribosomal subunit protein uL3 from Thermomicrobium roseum (strain ATCC 27502 / DSM 5159 / P-2).